The following is a 400-amino-acid chain: MSNQEFAQRWQGVMIDSYGTPGLSFVRGEGSTLWDADGTAYTDFVSGLAVNALGHAHPAVVGAVSRQIASLGHISNFYSAEPTITLAERLIELFGRPGRVFFCNSGAEANETAFKIGRLTGRSRIVAAQSGFHGRTMGSLALTGQPAKREPFLPLPGDVTHVPYGDAEALRAAVTEDTAMVILEPIQGESGVVVPPKGYLRAAREITEATGTLLVLDEVQTGIGRTGHWFAAQAEGVEADVVTLAKGLGGGLPLGAAVAFGRAAELMTPGHHASTFGGNPVSCARTRVLDTIAADGLLDRVKQLGSAPDEWSVRDAAAIRWSPMSGAGLMLGIVLNEPLAPQVQLAAQKAGFLVNVPAPDVVRLIPPLVIEETEVDAFLQALPGLLDAVHERDREGQTGE.

Pyridoxal 5'-phosphate is bound by residues 106–107 and phenylalanine 132; that span reads GA. Arginine 135 lines the N(2)-acetyl-L-ornithine pocket. 217-220 is a binding site for pyridoxal 5'-phosphate; the sequence is DEVQ. Position 246 is an N6-(pyridoxal phosphate)lysine (lysine 246). Serine 274 is a N(2)-acetyl-L-ornithine binding site. Threonine 275 contacts pyridoxal 5'-phosphate.

This sequence belongs to the class-III pyridoxal-phosphate-dependent aminotransferase family. ArgD subfamily. Homodimer. Requires pyridoxal 5'-phosphate as cofactor.

Its subcellular location is the cytoplasm. The enzyme catalyses N(2)-acetyl-L-ornithine + 2-oxoglutarate = N-acetyl-L-glutamate 5-semialdehyde + L-glutamate. It participates in amino-acid biosynthesis; L-arginine biosynthesis; N(2)-acetyl-L-ornithine from L-glutamate: step 4/4. The protein is Acetylornithine aminotransferase of Streptomyces clavuligerus.